A 957-amino-acid chain; its full sequence is ERC protein 2 (957 aa).

A compositionally biased stretch (polar residues) spans 1-13 (MYGSARTITNLEG). Residues 1–44 (MYGSARTITNLEGSPSRSPRLPRSPRLGHRRTSSGGGGGTGKTL) form a disordered region. Residues 14–25 (SPSRSPRLPRSP) are compositionally biased toward low complexity. Phosphoserine is present on residues serine 65 and serine 666. Residues 140 to 917 (RQVRDSTMLD…RMKLMADNYD (778 aa)) are a coiled coil. Positions 918 to 957 (DDHHHYHHHHHHHHHRSPGRSQHSNHRPSPDQDDEEGIWA) are disordered. Over residues 922 to 943 (HYHHHHHHHHHRSPGRSQHSNH) the composition is skewed to basic residues. Residues 948–957 (DQDDEEGIWA) show a composition bias toward acidic residues.

In terms of assembly, interacts with BSN, ERC1, PPFIA1, PPFIA2, PPFIA3 and PPFIA4. Interacts through its C-terminus with the PDZ domain of RIMS1. Part of a complex consisting of ERC2, RIMS1 and UNC13A.

The protein resides in the cytoplasm. It localises to the synapse. It is found in the presynaptic active zone. Its subcellular location is the cytoskeleton. Functionally, thought to be involved in the organization of the cytomatrix at the nerve terminals active zone (CAZ) which regulates neurotransmitter release. Seems to act together with BSN. May recruit liprin-alpha proteins to the CAZ. The sequence is that of ERC protein 2 (ERC2) from Homo sapiens (Human).